Consider the following 409-residue polypeptide: Microfibrillar-associated protein 3-like (409 aa).

An N-terminal signal peptide occupies residues 1 to 28 (MGLLKSHLTVCLPPSVPFLILVSTLATA). The Extracellular portion of the chain corresponds to 29 to 148 (KSVTNSTLNG…TLRVIFTSGD (120 aa)). N-linked (GlcNAc...) asparagine glycans are attached at residues Asn33, Asn37, Asn67, Asn111, and Asn135. Positions 47–141 (PVIIARTDHI…GTINNTVTLR (95 aa)) constitute an Ig-like C2-type domain. A disulfide bridge connects residues Cys68 and Cys125. Residues 149 to 169 (MGVYYMVVCLVAFTIVMILNI) form a helical membrane-spanning segment. Residues 170-409 (TRLCMMSSHL…NTCIIYESHV (240 aa)) lie on the Cytoplasmic side of the membrane. A Phosphotyrosine modification is found at Tyr287. Residues Ser298, Ser303, Ser306, and Ser307 each carry the phosphoserine modification. The interval 319-392 (VSVHPQSKKD…LPPAHLETTE (74 aa)) is disordered. Acidic residues predominate over residues 333-348 (QEGENLEVKDEEETEP). Positions 362–372 (DITTTELTSEE) are enriched in polar residues.

It is found in the cell membrane. It localises to the nucleus. The protein resides in the cytoplasm. May participate in the nuclear signaling of EGFR and MAPK1/ERK2. This Rattus norvegicus (Rat) protein is Microfibrillar-associated protein 3-like (Mfap3l).